The primary structure comprises 368 residues: RNA polymerase sigma factor SigA (368 aa).

Positions 16–90 (TLTLEDVKKQ…KLNPSDLSAP (75 aa)) are sigma-70 factor domain-1. A disordered region spans residues 69–90 (LVNEKDSSDTDEKLNPSDLSAP). Residues 71–83 (NEKDSSDTDEKLN) are compositionally biased toward basic and acidic residues. The tract at residues 135–205 (LAEANLRLVV…TRAIADQART (71 aa)) is sigma-70 factor domain-2. Positions 159–162 (DLIQ) match the Interaction with polymerase core subunit RpoC motif. Residues 214 to 291 (ETINKLIRVQ…QEAQSPSDHA (78 aa)) are sigma-70 factor domain-3. A sigma-70 factor domain-4 region spans residues 303–356 (VLDTLTDREENVLRLRFGLDDGRTRTLEEVGKVFGVTRERIRQIEAKALRKLRH). Positions 329-348 (LEEVGKVFGVTRERIRQIEA) form a DNA-binding region, H-T-H motif.

Belongs to the sigma-70 factor family. RpoD/SigA subfamily. Interacts transiently with the RNA polymerase catalytic core formed by RpoA, RpoB, RpoC and RpoZ (2 alpha, 1 beta, 1 beta' and 1 omega subunit) to form the RNA polymerase holoenzyme that can initiate transcription. Interacts (via sigma-70 factor domain 4) with the phage G1 protein gp67; this inhibits rRNA synthesis. Interaction with phage G1 protein gp67 does not inhibit transcription in general, but selectively inhibits transcription from promoters that require interaction of the RNA polymerase alpha subunit with DNA sequences upstream of the -35 promoter element.

Its subcellular location is the cytoplasm. Its function is as follows. Sigma factors are initiation factors that promote the attachment of RNA polymerase to specific initiation sites and are then released. This sigma factor is the primary sigma factor during exponential growth. In Staphylococcus aureus (strain NCTC 8325 / PS 47), this protein is RNA polymerase sigma factor SigA.